We begin with the raw amino-acid sequence, 300 residues long: Putative hydrolase ML2424 (300 aa).

Asp56 functions as the Nucleophile in the catalytic mechanism. Residues Asp56, Asp58, and Asp231 each coordinate Mg(2+). Asp58 serves as the catalytic Proton donor.

Belongs to the HAD-like hydrolase superfamily. SerB family. Mg(2+) serves as cofactor.

In Mycobacterium leprae (strain TN), this protein is Putative hydrolase ML2424.